The chain runs to 815 residues: Probable bifunctional folylpolyglutamate synthase/dihydropteroate synthase (815 aa).

The tract at residues 1–416 is folylpolyglutamate synthase; that stretch reads MRYDEAANFL…LVAGSLFAVA (416 aa). An ATP-binding site is contributed by 47–53; that stretch reads GSNGKGS. In terms of domain architecture, Pterin-binding spans 553 to 803; it reads TAVMGILNVT…DVPENVAAVR (251 aa). Residues 555-815 form a DHPS region; it reads VMGILNVTPD…EATRTGADAE (261 aa). Asparagine 560 provides a ligand contact to Mg(2+). Residues threonine 600, aspartate 633, asparagine 652, aspartate 722, lysine 758, and 791–793 contribute to the (7,8-dihydropterin-6-yl)methyl diphosphate site; that span reads RVH.

In the N-terminal section; belongs to the folylpolyglutamate synthase family. This sequence in the C-terminal section; belongs to the DHPS family. Requires Mg(2+) as cofactor.

The enzyme catalyses (6S)-5,6,7,8-tetrahydrofolyl-(gamma-L-Glu)(n) + L-glutamate + ATP = (6S)-5,6,7,8-tetrahydrofolyl-(gamma-L-Glu)(n+1) + ADP + phosphate + H(+). It carries out the reaction (7,8-dihydropterin-6-yl)methyl diphosphate + 4-aminobenzoate = 7,8-dihydropteroate + diphosphate. The protein operates within cofactor biosynthesis; tetrahydrofolylpolyglutamate biosynthesis. Its pathway is cofactor biosynthesis; tetrahydrofolate biosynthesis; 7,8-dihydrofolate from 2-amino-4-hydroxy-6-hydroxymethyl-7,8-dihydropteridine diphosphate and 4-aminobenzoate: step 1/2. Its function is as follows. Can complement an H.volcanii mutant strain that is thymidine auxotroph because it lacks the two dihydrofolate reductase genes encoded by hdrA and hdrB. The polypeptide is Probable bifunctional folylpolyglutamate synthase/dihydropteroate synthase (folP) (Halobacterium salinarum (strain ATCC 700922 / JCM 11081 / NRC-1) (Halobacterium halobium)).